The following is a 233-amino-acid chain: Small ribosomal subunit protein uS3 (233 aa).

One can recognise a KH type-2 domain in the interval 39–107; the sequence is VRQYLKKELA…PAQINISEVR (69 aa).

Belongs to the universal ribosomal protein uS3 family. In terms of assembly, part of the 30S ribosomal subunit. Forms a tight complex with proteins S10 and S14.

In terms of biological role, binds the lower part of the 30S subunit head. Binds mRNA in the 70S ribosome, positioning it for translation. In Photorhabdus laumondii subsp. laumondii (strain DSM 15139 / CIP 105565 / TT01) (Photorhabdus luminescens subsp. laumondii), this protein is Small ribosomal subunit protein uS3.